The primary structure comprises 465 residues: MSKYIALENLPVDLQHKGATQNESTADILKQLPHERLQAVLEKIPEEDLEVRRLLSILKKPEVVENEDVQQRRIRLAEILMVDEIDLENINNMENINGEEVDEEDDEDFFTPATSELIFARRFLINYSLERSRKRLQKEMERHQKFNTRQELLSRRTELQRMANLELAGSQLVSTKPISAVSLSTDDMVVATGSWAGDLQVLNSQTLQPLTQKLDSHVGKIGAIDWHPDSNNQMISCAEDGLIKNFQYSNEEGGLRLLGDLVGHERRISDVKYHPSGKFIGSASHDMTWRLWDASTHQELLLQEGHDKGVFSLSFQCDGSLVCSGGMDSLSMLWDIRSGSKVMTLAGHSKPIYTVAWSPNGYQVATGGGDGIINVWDIRKRDEGQLNQILAHRNIVTQVRFSKEDGGKKLVSCGYDNLINVYSSDTWLKMGSLAGHTDKIISLDISNNSHFLVSGGWDRSIKLWN.

WD repeat units follow at residues 173–212 (VSTK…PLTQ), 216–256 (SHVG…GGLR), 263–302 (GHER…ELLL), 305–344 (GHDK…KVMT), 347–386 (GHSK…EGQL), 391–432 (AHRN…KMGS), and 435–464 (GHTD…IKLW).

Component of the U4/U6-U5 tri-snRNP complex composed of the U4, U6 and U5 snRNAs and at least PRP3, PRP4, PRP6, PRP8, PRP18, PRP31, PRP38, SNU13, SNU23, SNU66, SNU114, SPP381, SMB1, SMD1, SMD2, SMD3, SMX2, SMX3, LSM2, LSM3, LSM4, LSM5, LSM6, LSM7, LSM8, BRR2 and DIB1.

Its subcellular location is the nucleus. Involved in RNA splicing. Is required for the association of U4/U6 snRNP with U5 snRNP in an early step of spliceosome assembly. This Saccharomyces cerevisiae (strain ATCC 204508 / S288c) (Baker's yeast) protein is U4/U6 small nuclear ribonucleoprotein PRP4 (PRP4).